Reading from the N-terminus, the 181-residue chain is ATP synthase subunit b 2 (181 aa).

Residues 1–18 (MATTTHDAGHGAAEAAHG) are compositionally biased toward low complexity. A disordered region spans residues 1–20 (MATTTHDAGHGAAEAAHGSS). A helical membrane pass occupies residues 34-54 (IFWLLVTLVVIYLILSRIALP).

It belongs to the ATPase B chain family. As to quaternary structure, F-type ATPases have 2 components, F(1) - the catalytic core - and F(0) - the membrane proton channel. F(1) has five subunits: alpha(3), beta(3), gamma(1), delta(1), epsilon(1). F(0) has three main subunits: a(1), b(2) and c(10-14). The alpha and beta chains form an alternating ring which encloses part of the gamma chain. F(1) is attached to F(0) by a central stalk formed by the gamma and epsilon chains, while a peripheral stalk is formed by the delta and b chains.

It localises to the cell inner membrane. In terms of biological role, f(1)F(0) ATP synthase produces ATP from ADP in the presence of a proton or sodium gradient. F-type ATPases consist of two structural domains, F(1) containing the extramembraneous catalytic core and F(0) containing the membrane proton channel, linked together by a central stalk and a peripheral stalk. During catalysis, ATP synthesis in the catalytic domain of F(1) is coupled via a rotary mechanism of the central stalk subunits to proton translocation. Functionally, component of the F(0) channel, it forms part of the peripheral stalk, linking F(1) to F(0). The b'-subunit is a diverged and duplicated form of b found in plants and photosynthetic bacteria. In Ruegeria sp. (strain TM1040) (Silicibacter sp.), this protein is ATP synthase subunit b 2 (atpF2).